Here is a 120-residue protein sequence, read N- to C-terminus: Host cell factor C1 regulator 1 (120 aa).

Residues 1 to 30 are disordered; it reads MILQQPLERGPPSRDPRATTGVTRGLNASL. The segment covering 20 to 30 has biased composition (polar residues); sequence TGVTRGLNASL. The interaction with HCFC1 stretch occupies residues 58–61; the sequence is DHPY. Positions 92–101 match the Nuclear export signal motif; that stretch reads IPEALRLLRL.

Interacts with HCFC1.

The protein resides in the cytoplasm. It is found in the nucleus. In terms of biological role, regulates HCFC1 activity by modulating its subcellular localization. Overexpression of HCFC1R1 leads to accumulation of HCFC1 in the cytoplasm. HCFC1R1-mediated export may provide the pool of cytoplasmic HCFC1 required for import of virion-derived VP16 into the nucleus. The sequence is that of Host cell factor C1 regulator 1 (Hcfc1r1) from Mus musculus (Mouse).